The chain runs to 72 residues: Translation initiation factor IF-1 (72 aa).

Residues 1–72 enclose the S1-like domain; the sequence is MAKEEQIELE…TKGRITFRMK (72 aa).

This sequence belongs to the IF-1 family. As to quaternary structure, component of the 30S ribosomal translation pre-initiation complex which assembles on the 30S ribosome in the order IF-2 and IF-3, IF-1 and N-formylmethionyl-tRNA(fMet); mRNA recruitment can occur at any time during PIC assembly.

It is found in the cytoplasm. Its function is as follows. One of the essential components for the initiation of protein synthesis. Stabilizes the binding of IF-2 and IF-3 on the 30S subunit to which N-formylmethionyl-tRNA(fMet) subsequently binds. Helps modulate mRNA selection, yielding the 30S pre-initiation complex (PIC). Upon addition of the 50S ribosomal subunit IF-1, IF-2 and IF-3 are released leaving the mature 70S translation initiation complex. This is Translation initiation factor IF-1 from Alcanivorax borkumensis (strain ATCC 700651 / DSM 11573 / NCIMB 13689 / SK2).